A 391-amino-acid polypeptide reads, in one-letter code: MKGPCEVQKNEDQEGEAAATGPQAETLEAERSWTADSHSALEAEGTHGLGERVMATLYLKSCRANSVVPVSCLLRQEGASELNLRHRGLGPQGVRALASVLTSNPYIKRLDLRDNGLCGAGAEALADVLRKNSIISDVDLSENQIGAAGLQAICTALALNPTVEKMQLQGNRLEEQAAQHLAALLLHHRGLKSLDLSYNQLNDLAGEILGPAVAENTGLTELNLSWNHLRGLGATAFARGLEANIFLKVLDISHNGFGDSGASAIGDALRVNNVLEELNMRNNRISVSGALKLGLGLQVNQTLRILIISKNPIRSDGCVGLLKSVRNNKSSALELLDVSDIQVSRECEDLASSMSEILPGLCIKRYTSRRKDWPQASTPSQPASAPSDSGL.

The disordered stretch occupies residues 1–38 (MKGPCEVQKNEDQEGEAAATGPQAETLEAERSWTADSH). Basic and acidic residues predominate over residues 28-38 (EAERSWTADSH). LRR repeat units follow at residues 106 to 126 (YIKR…EALA), 134 to 154 (IISD…QAIC), 162 to 182 (TVEK…QHLA), 190 to 211 (GLKS…ILGP), 218 to 239 (GLTE…AFAR), 246 to 259 (FLKV…GFGD), 274 to 294 (VLEE…LKLG), 302 to 323 (TLRI…GLLK), and 332 to 354 (ALEL…ASSM). Residues 371–391 (KDWPQASTPSQPASAPSDSGL) are disordered. Over residues 374–391 (PQASTPSQPASAPSDSGL) the composition is skewed to low complexity.

The sequence is that of Leucine-rich repeat-containing protein 74B from Mus musculus (Mouse).